We begin with the raw amino-acid sequence, 212 residues long: Deoxyribose-phosphate aldolase (212 aa).

Asp89 acts as the Proton donor/acceptor in catalysis. Residue Lys151 is the Schiff-base intermediate with acetaldehyde of the active site. Lys180 (proton donor/acceptor) is an active-site residue.

The protein belongs to the DeoC/FbaB aldolase family. DeoC type 1 subfamily.

The protein localises to the cytoplasm. The catalysed reaction is 2-deoxy-D-ribose 5-phosphate = D-glyceraldehyde 3-phosphate + acetaldehyde. The protein operates within carbohydrate degradation; 2-deoxy-D-ribose 1-phosphate degradation; D-glyceraldehyde 3-phosphate and acetaldehyde from 2-deoxy-alpha-D-ribose 1-phosphate: step 2/2. Catalyzes a reversible aldol reaction between acetaldehyde and D-glyceraldehyde 3-phosphate to generate 2-deoxy-D-ribose 5-phosphate. The polypeptide is Deoxyribose-phosphate aldolase (Clostridium botulinum (strain Kyoto / Type A2)).